We begin with the raw amino-acid sequence, 102 residues long: Small ribosomal subunit protein uS10 (102 aa).

Belongs to the universal ribosomal protein uS10 family. In terms of assembly, part of the 30S ribosomal subunit.

In terms of biological role, involved in the binding of tRNA to the ribosomes. The sequence is that of Small ribosomal subunit protein uS10 from Bartonella tribocorum (strain CIP 105476 / IBS 506).